A 379-amino-acid chain; its full sequence is Cytochrome b (379 aa).

4 helical membrane passes run 33–53 (FGSL…FLAM), 77–98 (WLIR…SIHA), 113–133 (WNIG…GYVL), and 178–198 (FFAF…VHLL). Heme b contacts are provided by histidine 83 and histidine 97. 2 residues coordinate heme b: histidine 182 and histidine 196. Histidine 201 lines the a ubiquinone pocket. The next 4 membrane-spanning stretches (helical) occupy residues 226-246 (IKDL…ALFF), 288-308 (LGGV…PLLN), 320-340 (ITQT…WIGG), and 347-367 (FTMI…ILMP).

This sequence belongs to the cytochrome b family. In terms of assembly, the cytochrome bc1 complex contains 11 subunits: 3 respiratory subunits (MT-CYB, CYC1 and UQCRFS1), 2 core proteins (UQCRC1 and UQCRC2) and 6 low-molecular weight proteins (UQCRH/QCR6, UQCRB/QCR7, UQCRQ/QCR8, UQCR10/QCR9, UQCR11/QCR10 and a cleavage product of UQCRFS1). This cytochrome bc1 complex then forms a dimer. The cofactor is heme b.

The protein resides in the mitochondrion inner membrane. Its function is as follows. Component of the ubiquinol-cytochrome c reductase complex (complex III or cytochrome b-c1 complex) that is part of the mitochondrial respiratory chain. The b-c1 complex mediates electron transfer from ubiquinol to cytochrome c. Contributes to the generation of a proton gradient across the mitochondrial membrane that is then used for ATP synthesis. This chain is Cytochrome b (MT-CYB), found in Thaptomys nigrita (Blackish grass mouse).